Here is a 2968-residue protein sequence, read N- to C-terminus: Trinucleotide repeat-containing gene 18 protein (2968 aa).

Disordered regions lie at residues 1 to 24 (MDGR…SGLA) and 139 to 261 (GSPL…LAER). Residues 139–150 (GSPLLSQLGQPS) show a composition bias toward low complexity. Composition is skewed to basic and acidic residues over residues 221–233 (GKKD…EEAS) and 243–260 (QEAR…RLAE). At Ser263 the chain carries Phosphoserine. Positions 304–322 (GAKEAARQDEGARLLRRTE) are enriched in basic and acidic residues. 2 disordered regions span residues 304 to 356 (GAKE…PAGV) and 381 to 488 (FDER…PAAQ). A compositionally biased stretch (pro residues) spans 327 to 351 (GPRPCPSPLPPPPAPPKGPPAPPAA). Basic and acidic residues-rich tracts occupy residues 395–405 (RDARAREREAG), 419–431 (PLDR…EKNS), and 464–479 (ELLK…ERAP). Residue Ser611 is modified to Phosphoserine. 8 disordered regions span residues 612–679 (PFGG…EVRH), 941–1002 (EHRA…SPVA), 1019–1055 (PAYA…PENV), 1106–1190 (DADG…MATP), 1212–1236 (SCAE…PGRT), 1279–1306 (LAQV…GQCP), 1497–1566 (KQRE…SDDY), and 1687–1855 (SLKS…RERA). Lys620 is covalently cross-linked (Glycyl lysine isopeptide (Lys-Gly) (interchain with G-Cter in SUMO2)). Composition is skewed to basic and acidic residues over residues 651–660 (LKRDPERPES) and 941–955 (EHRA…KRGL). Residues 916–949 (LQQQAAQALELQRSAQLVQERLKAQEHRAEMEEK) adopt a coiled-coil conformation. Low complexity-rich tracts occupy residues 966 to 983 (AGPG…AGPA) and 1019 to 1031 (PAYA…SSHP). Positions 1032-1043 (TSPPPASPPPTP) are enriched in pro residues. Basic and acidic residues predominate over residues 1046–1055 (TRKEEAPENV). Residues Ser1127 and Ser1136 each carry the phosphoserine modification. Basic and acidic residues predominate over residues 1142 to 1162 (EPLREGPEEEPLAEREVKAEV). The segment covering 1171-1181 (ELPPLESPLPL) has biased composition (pro residues). Residues 1481–1516 (LDFRMRLAEVQRQYKEKQRELVKLQRRRDSEDRREE) are a coiled coil. Basic and acidic residues predominate over residues 1497–1519 (KQRELVKLQRRRDSEDRREEPHR). Residues 1520–1534 (SLARRGPGRPRKRTH) are compositionally biased toward basic residues. Ser1540 is modified (phosphoserine). A compositionally biased stretch (low complexity) spans 1549–1563 (GHSSGKLSSKSLLTS). A compositionally biased stretch (acidic residues) spans 1816-1842 (SSEESFDQDESSEEEDEEEELEEEDEA). A phosphoserine mark is found at Ser1857 and Ser1863. Disordered regions lie at residues 1912 to 2148 (YTDS…LTPA) and 2295 to 2771 (LLVP…RLPS). Basic and acidic residues-rich tracts occupy residues 1957–1968 (SPDKAKLAVEKG) and 1993–2004 (LWTRRRSERIFL). The span at 2007 to 2024 (ASAAAPAPVSTAPATKTS) shows a compositional bias: low complexity. Residues 2034-2046 (PRKDAGRAKDRKD) show a composition bias toward basic and acidic residues. Over residues 2069 to 2085 (ALPSEARAPHASSLTAA) the composition is skewed to low complexity. Over residues 2093–2103 (KGKEVKKENRG) the composition is skewed to basic and acidic residues. Thr2146 bears the Phosphothreonine mark. Residues 2307–2316 (TSKDTGEGKD) show a composition bias toward basic and acidic residues. The segment covering 2329-2338 (ARGRGRKPSA) has biased composition (basic residues). The span at 2365–2374 (EPSSTPGSKK) shows a compositional bias: low complexity. Residues 2375–2384 (SPPEPVDKRA) show a composition bias toward basic and acidic residues. Residues 2390 to 2401 (RPAPPQPSPAPP) are compositionally biased toward pro residues. Residues 2411-2433 (PFAELPAPATSLAPAPLITMPAT) are compositionally biased toward low complexity. Composition is skewed to basic and acidic residues over residues 2441-2468 (RAAE…DHEG) and 2477-2487 (AKEALLLREDP). 2 stretches are compositionally biased toward low complexity: residues 2559-2580 (SSSS…SGSE) and 2603-2671 (SAAS…SSSS). The span at 2673 to 2685 (TDEDSSCSSDDEA) shows a compositional bias: acidic residues. Residues 2723 to 2736 (APQPQAPPPQPTQP) are compositionally biased toward pro residues. Ser2771 bears the Phosphoserine mark. Positions 2817–2962 (EMIRIGDCAV…PTTGMIFSTD (146 aa)) constitute a BAH domain.

The chain is Trinucleotide repeat-containing gene 18 protein from Homo sapiens (Human).